We begin with the raw amino-acid sequence, 472 residues long: MALNLTTSRRALGSLKPLTRAAFVGARGYATAEPDLKATLREAIPAKRELLKKVKAHANKTIGEVKVENTLGGMRGLKAMVWEGSVLDANEGIRFHGRTIKDCQKELPKGKTGTEMLPEAMFWLLLTGQVPSTNQIRVFSRELAEKAQIPEFVAKMLDNFPKDLHPMTQFAMAVSALNYESKFAKAYEQGLNKADYWEPTFDDCISLLAKLPTIAAKIYQNSYRGGGALPAEVDLEQDWSYNFAAMLGKGGKENENFQDLLRLYLALHGDHEGGNVSAHATHLVGSALSDPFLSYSAGLQGLAGPLHGLAAQEVLRWILQMKEAIPAKYTEQDVNDYLWSTLNSGRVVPGYGHAVLRKPDPRFEALMDYAAARPEIAQDPVFQLVQKNSQIAPEVLKKHGKTKNPYPNVDSSSGVLFHHYGFHETLYYTATFGVSRGLGPLAQLVWDRALGLPIERPKSINLEGILKQVEGQ.

The transit peptide at 1–29 (MALNLTTSRRALGSLKPLTRAAFVGARGY) directs the protein to the mitochondrion. Arginine 75 and lysine 193 together coordinate CoA. An oxaloacetate-binding site is contributed by histidine 271. Leucine 306 is a CoA binding site. Residue histidine 307 is part of the active site. CoA is bound by residues valine 348, glycine 350, and tyrosine 351. Residues histidine 353 and arginine 362 each contribute to the oxaloacetate site. Residue histidine 353 is part of the active site. Residues threonine 402, lysine 403, and asparagine 408 each contribute to the CoA site. Residue aspartate 410 is part of the active site. Oxaloacetate contacts are provided by arginine 436 and arginine 456.

This sequence belongs to the citrate synthase family. As to quaternary structure, homodimer.

Its subcellular location is the mitochondrion matrix. It catalyses the reaction propanoyl-CoA + oxaloacetate + H2O = (2S,3S)-2-methylcitrate + CoA + H(+). The enzyme catalyses oxaloacetate + acetyl-CoA + H2O = citrate + CoA + H(+). It functions in the pathway organic acid metabolism; propanoate degradation. In terms of biological role, component of the methylcitrate cycle that catalyzes the synthesis of (2S,3S)-2-methylcitrate from propionyl-CoA and oxaloacetate. Plays an important role in detoxification of propionyl-CoA, an inhibitor of both primary and secondary metabolism. Also has citrate synthase activity using as substrates acetyl-CoA and oxaloacetate. The protein is 2-methylcitrate synthase, mitochondrial of Fusarium solani (Filamentous fungus).